We begin with the raw amino-acid sequence, 96 residues long: UPF0251 protein Shal_3723 (96 aa).

The protein belongs to the UPF0251 family.

The protein is UPF0251 protein Shal_3723 of Shewanella halifaxensis (strain HAW-EB4).